A 390-amino-acid polypeptide reads, in one-letter code: Transaldolase (390 aa).

Lysine 135 functions as the Schiff-base intermediate with substrate in the catalytic mechanism. 2 consecutive EF-hand domains span residues 329-364 (AFCH…FDAL) and 365-388 (DHDH…LALT). Ca(2+)-binding residues include aspartate 342, aspartate 344, aspartate 346, cysteine 348, glutamate 353, aspartate 365, aspartate 367, aspartate 369, arginine 371, and aspartate 376.

It belongs to the transaldolase family. Type 1 subfamily.

The protein resides in the cytoplasm. It catalyses the reaction D-sedoheptulose 7-phosphate + D-glyceraldehyde 3-phosphate = D-erythrose 4-phosphate + beta-D-fructose 6-phosphate. Its pathway is carbohydrate degradation; pentose phosphate pathway; D-glyceraldehyde 3-phosphate and beta-D-fructose 6-phosphate from D-ribose 5-phosphate and D-xylulose 5-phosphate (non-oxidative stage): step 2/3. In terms of biological role, transaldolase is important for the balance of metabolites in the pentose-phosphate pathway. In Prochlorococcus marinus (strain MIT 9313), this protein is Transaldolase.